We begin with the raw amino-acid sequence, 973 residues long: E3 ubiquitin-protein ligase BRE1A (973 aa).

Residues 1-37 are disordered; that stretch reads MSGIGNKRAAGEPGTSMPPEKKTAVEDSGTTVETIKL. K21 carries the post-translational modification N6-acetyllysine. S41 is subject to Phosphoserine. Residues 43–90 are a coiled coil; the sequence is TEELDIRTLQSKNRKLAEMLDQRQAIEDELREHIEKLERRQATDDASL. Positions 128–153 are disordered; the sequence is VVPEPEPDSDSNQERKDDRERGDGQE. 2 positions are modified to phosphoserine: S136 and S138. A compositionally biased stretch (basic and acidic residues) spans 139-151; the sequence is NQERKDDRERGDG. 2 coiled-coil regions span residues 168-378 and 429-896; these read EEME…VKET and SLHK…TTKK. K348 and K510 each carry N6-acetyllysine. Positions 507–620 are disordered; it reads DLNKTRLRSG…GKHDDGRKKE (114 aa). Position 522 is a phosphoserine (S522). Basic and acidic residues-rich tracts occupy residues 527–544 and 553–620; these read EDPK…EDLA and SQED…RKKE. S560 carries the phosphoserine modification. The segment at 920–959 adopts an RING-type zinc-finger fold; the sequence is CPCCNMRKKDAVLTKCFHVFCFECVKTRYDTRQRKCPKCN.

The protein belongs to the BRE1 family. In terms of assembly, component of the RNF20/40 complex (also known as BRE1 complex) probably composed of 2 copies of RNF20/BRE1A and 2 copies of RNF40/BRE1B. Interacts with UBE2E1/UBCH6. Interacts with p53/TP53 and WAC. Interacts with PAF1; the interaction mediates the association of the PAF1 and RNF20/40 complexes which is a prerequsite for recruitment of UBE2A/B. Interacts with PA2G4. Interacts with FBXL19.

Its subcellular location is the nucleus. It carries out the reaction S-ubiquitinyl-[E2 ubiquitin-conjugating enzyme]-L-cysteine + [acceptor protein]-L-lysine = [E2 ubiquitin-conjugating enzyme]-L-cysteine + N(6)-ubiquitinyl-[acceptor protein]-L-lysine.. The protein operates within protein modification; protein ubiquitination. Its function is as follows. Component of the RNF20/40 E3 ubiquitin-protein ligase complex that mediates monoubiquitination of 'Lys-120' of histone H2B (H2BK120ub1). H2BK120ub1 gives a specific tag for epigenetic transcriptional activation and is also prerequisite for histone H3 'Lys-4' and 'Lys-79' methylation (H3K4me and H3K79me, respectively). It thereby plays a central role in histone code and gene regulation. The RNF20/40 complex forms a H2B ubiquitin ligase complex in cooperation with the E2 enzyme UBE2A or UBE2B; reports about the cooperation with UBE2E1/UBCH are contradictory. Required for transcriptional activation of Hox genes. Recruited to the MDM2 promoter, probably by being recruited by p53/TP53, and thereby acts as a transcriptional coactivator. Mediates the polyubiquitination of PA2G4 leading to its proteasome-mediated degradation. The protein is E3 ubiquitin-protein ligase BRE1A (Rnf20) of Mus musculus (Mouse).